A 150-amino-acid chain; its full sequence is MKCPFCNFEESKVVDSRATDDNTTIRRRRECLNCNKRYTTYEKIEDFPVLVVKKDLARENFNKEKIINGLIIACQKRPVSRKQIEDIAYEIEKSISNRMVTEIASKDIGEMVMDKLKQVDEISYVRFASVYRQFKDINTFLEEIKNLVVN.

A zinc finger spans residues 3–34 (CPFCNFEESKVVDSRATDDNTTIRRRRECLNC). In terms of domain architecture, ATP-cone spans 49–139 (VLVVKKDLAR…VYRQFKDINT (91 aa)).

This sequence belongs to the NrdR family. Requires Zn(2+) as cofactor.

Negatively regulates transcription of bacterial ribonucleotide reductase nrd genes and operons by binding to NrdR-boxes. The protein is Transcriptional repressor NrdR of Clostridium botulinum (strain Eklund 17B / Type B).